Reading from the N-terminus, the 187-residue chain is Troponin I, slow skeletal muscle (187 aa).

Residue Pro-2 is modified to N-acetylproline. The tract at residues 2–48 (PEVERKPKITASRKLLLKSLMLAKAKECWEQEHEEREAEKVRYLAER) is involved in binding TNC. Ser-58 carries the phosphoserine modification. Residues 97-118 (LKLKVMDLRGKFKRPPLRRVRV) are involved in binding TNC and actin.

Belongs to the troponin I family. Binds to actin and tropomyosin. Highest levels observed in human skeletal muscle (e.g. gastrocnemious muscle), differentiated cultures of primary human muscle cells and rhabdomyosarcoma cells cultured in low serum medium. Expressed in C2 muscle cell myoblasts and myotubes.

Troponin I is the inhibitory subunit of troponin, the thin filament regulatory complex which confers calcium-sensitivity to striated muscle actomyosin ATPase activity. In Homo sapiens (Human), this protein is Troponin I, slow skeletal muscle (TNNI1).